A 168-amino-acid chain; its full sequence is S-ribosylhomocysteine lyase (168 aa).

Residues histidine 54, histidine 58, and cysteine 128 each contribute to the Fe cation site.

It belongs to the LuxS family. Homodimer. It depends on Fe cation as a cofactor.

It catalyses the reaction S-(5-deoxy-D-ribos-5-yl)-L-homocysteine = (S)-4,5-dihydroxypentane-2,3-dione + L-homocysteine. In terms of biological role, involved in the synthesis of autoinducer 2 (AI-2) which is secreted by bacteria and is used to communicate both the cell density and the metabolic potential of the environment. The regulation of gene expression in response to changes in cell density is called quorum sensing. Catalyzes the transformation of S-ribosylhomocysteine (RHC) to homocysteine (HC) and 4,5-dihydroxy-2,3-pentadione (DPD). The sequence is that of S-ribosylhomocysteine lyase from Mannheimia succiniciproducens (strain KCTC 0769BP / MBEL55E).